Reading from the N-terminus, the 718-residue chain is Ribosomal RNA large subunit methyltransferase K/L (718 aa).

Residues 43–154 (TQYRILLWSR…QDELVVSLDL (112 aa)) enclose the THUMP domain.

It belongs to the methyltransferase superfamily. RlmKL family.

Its subcellular location is the cytoplasm. It carries out the reaction guanosine(2445) in 23S rRNA + S-adenosyl-L-methionine = N(2)-methylguanosine(2445) in 23S rRNA + S-adenosyl-L-homocysteine + H(+). It catalyses the reaction guanosine(2069) in 23S rRNA + S-adenosyl-L-methionine = N(2)-methylguanosine(2069) in 23S rRNA + S-adenosyl-L-homocysteine + H(+). Specifically methylates the guanine in position 2445 (m2G2445) and the guanine in position 2069 (m7G2069) of 23S rRNA. In Histophilus somni (strain 2336) (Haemophilus somnus), this protein is Ribosomal RNA large subunit methyltransferase K/L.